A 395-amino-acid polypeptide reads, in one-letter code: Long-chain-alcohol dehydrogenase 1 (395 aa).

NAD(+) is bound by residues 98–102 (GSALD) and 141–144 (TTSG).

The protein belongs to the iron-containing alcohol dehydrogenase family. In terms of assembly, homooctamer.

The catalysed reaction is glycerol + NAD(+) = dihydroxyacetone + NADH + H(+). It carries out the reaction a long-chain primary fatty alcohol + 2 NAD(+) + H2O = a long-chain fatty acid + 2 NADH + 3 H(+). In terms of biological role, long-chain alkyl alcohol dehydrogenase that can oxidize a broad range of alkyl alcohols from ethanol to 1-triacontanol (C2 to C30) as well as 1,3-propanediol and acetaldehyde. The best substrate is ethanol. Also oxidizes glycerol. This is Long-chain-alcohol dehydrogenase 1 (adh1) from Geobacillus thermodenitrificans (strain NG80-2).